A 440-amino-acid polypeptide reads, in one-letter code: Xylose isomerase (440 aa).

Active-site residues include H100 and D103. The Mg(2+) site is built by E231, E267, H270, D295, D306, D308, and D338.

The protein belongs to the xylose isomerase family. As to quaternary structure, homotetramer. The cofactor is Mg(2+).

It is found in the cytoplasm. The catalysed reaction is alpha-D-xylose = alpha-D-xylulofuranose. The polypeptide is Xylose isomerase (Burkholderia multivorans (strain ATCC 17616 / 249)).